The sequence spans 379 residues: Cobalt-precorrin-5B C(1)-methyltransferase (379 aa).

Belongs to the CbiD family.

The catalysed reaction is Co-precorrin-5B + S-adenosyl-L-methionine = Co-precorrin-6A + S-adenosyl-L-homocysteine. It participates in cofactor biosynthesis; adenosylcobalamin biosynthesis; cob(II)yrinate a,c-diamide from sirohydrochlorin (anaerobic route): step 6/10. Its function is as follows. Catalyzes the methylation of C-1 in cobalt-precorrin-5B to form cobalt-precorrin-6A. The polypeptide is Cobalt-precorrin-5B C(1)-methyltransferase (Salmonella schwarzengrund (strain CVM19633)).